Reading from the N-terminus, the 553-residue chain is Effector protein HopAB2 (553 aa).

Disordered stretches follow at residues 1 to 123 (MAGI…APRR), 198 to 227 (AVHQ…GSSQ), and 239 to 275 (APNQ…AAMR). A host recognition; Pto interaction region spans residues 1-308 (MAGINRAGPS…LRTALERHVM (308 aa)). Over residues 24 to 39 (SGQAHGSGSGASSSNS) the composition is skewed to low complexity. The segment covering 47–60 (SNTPPSNAPAPPPT) has biased composition (pro residues). Over residues 217–227 (SPAASSSGSSQ) the composition is skewed to low complexity. Residues 242-255 (QGRSSNTAASQTPV) are compositionally biased toward polar residues. The interval 309-553 (QRLPIPLDIG…IAKYAFRIVP (245 aa)) is E3 ubiquitin-protein ligase. The short motif at 325 to 328 (GINP) is the Interaction with Pto-kinase element. The tract at residues 361–380 (APRPAVPVAPATASRRPDGT) is disordered. The required for E3 ubiquitin-protein ligase and anti-PCD activities and pathogenesis stretch occupies residues 512–529 (KDLAFMDMKKLAQFLAGK).

The protein belongs to the HopAB family. Interacts physically with plant cell Pto. Auto-ubiquitinated.

The protein localises to the secreted. Functionally, effector protein involved in gene-for-gene resistance in tomato plants. It is recognized by the host Pto resistance protein and elicits Pto and Prf-dependent hypersensitive response (HR) and programmed cell death (PCD), resulting in host immunity. In susceptible plants, acts as a virulence factor by suppressing PCD and HR-based plant immunity. This function requires its E3 ubiquitin ligase activity probably by recruiting E2 enzymes and transferring ubiquitin molecules to cellular proteins involved in regulation of PCD and targeting them for degradation. Also, induces expression of host genes involved in ethylene biosynthesis and signaling, in particular ACO1 and ACO2, encoding the ethylene-forming enzyme ACC oxidase. This is Effector protein HopAB2 (hopAB2) from Pseudomonas syringae pv. tomato (strain ATCC BAA-871 / DC3000).